We begin with the raw amino-acid sequence, 291 residues long: tRNA dimethylallyltransferase (291 aa).

Position 9-16 (9-16) interacts with ATP; it reads GTTASGKT. 11–16 is a binding site for substrate; sequence TASGKT. The segment at 34–37 is interaction with substrate tRNA; it reads DSLC.

It belongs to the IPP transferase family. As to quaternary structure, monomer. Mg(2+) is required as a cofactor.

The catalysed reaction is adenosine(37) in tRNA + dimethylallyl diphosphate = N(6)-dimethylallyladenosine(37) in tRNA + diphosphate. Catalyzes the transfer of a dimethylallyl group onto the adenine at position 37 in tRNAs that read codons beginning with uridine, leading to the formation of N6-(dimethylallyl)adenosine (i(6)A). The polypeptide is tRNA dimethylallyltransferase (Campylobacter lari (strain RM2100 / D67 / ATCC BAA-1060)).